Here is a 712-residue protein sequence, read N- to C-terminus: Anaerobic ribonucleoside-triphosphate reductase (712 aa).

The region spanning 3-92 is the ATP-cone domain; sequence PHVMKRDGCK…EYRHDRDIQR (90 aa). A Glycine radical domain is found at 583-708; that stretch reads KKVNPYDKID…VKRRVKHLGN (126 aa). Cysteine 644, cysteine 647, cysteine 662, and cysteine 665 together coordinate Zn(2+). Glycine 681 is modified (glycine radical).

This sequence belongs to the anaerobic ribonucleoside-triphosphate reductase family. In terms of assembly, forms a tetramer composed of two NrdD and two NrdG subunits.

It carries out the reaction a ribonucleoside 5'-triphosphate + formate + H(+) = a 2'-deoxyribonucleoside 5'-triphosphate + CO2 + H2O. With respect to regulation, activated under anaerobic conditions by NrdG, a tightly associated activase. Activation involves the formation of a glycyl radical at Gly-681. Catalyzes the conversion of ribonucleotides into deoxyribonucleotides, which are required for DNA synthesis and repair. The sequence is that of Anaerobic ribonucleoside-triphosphate reductase (nrdD) from Salmonella typhimurium (strain LT2 / SGSC1412 / ATCC 700720).